Reading from the N-terminus, the 364-residue chain is Methylthioribose-1-phosphate isomerase (364 aa).

Substrate is bound by residues 46-48 (RGA), Arg89, and Gln196. Asp237 (proton donor) is an active-site residue. 247–248 (NK) serves as a coordination point for substrate.

Belongs to the eIF-2B alpha/beta/delta subunits family. MtnA subfamily.

The enzyme catalyses 5-(methylsulfanyl)-alpha-D-ribose 1-phosphate = 5-(methylsulfanyl)-D-ribulose 1-phosphate. Its pathway is amino-acid biosynthesis; L-methionine biosynthesis via salvage pathway; L-methionine from S-methyl-5-thio-alpha-D-ribose 1-phosphate: step 1/6. In terms of biological role, catalyzes the interconversion of methylthioribose-1-phosphate (MTR-1-P) into methylthioribulose-1-phosphate (MTRu-1-P). The protein is Methylthioribose-1-phosphate isomerase of Pelotomaculum thermopropionicum (strain DSM 13744 / JCM 10971 / SI).